A 67-amino-acid polypeptide reads, in one-letter code: Lantibiotic Flvbeta.b (67 aa).

Positions 1–34 (MDNNTKLQKLYEQLAATGSEKELDAMLDENMAGA) are cleaved as a propeptide — cleaved by FlvT. At Ser36 the chain carries 2,3-didehydroalanine (Ser); by FlvM2. 2,3-didehydrobutyrine; by FlvM2 occurs at positions 39 and 43. 3 consecutive cross-links (beta-methyllanthionine (Thr-Cys); by FlvM2) follow at residues 50 to 56 (TTGFDWC), 58 to 61 (TGAC), and 62 to 65 (TYSC).

Contains DL-beta-methyllanthionine, when coepressed in E.coli with the flavecin synthetase FlvM2.

The protein resides in the secreted. Its function is as follows. Lanthionine-containing peptide antibiotic (lantibiotic) only active on Gram-positive bacteria in synergy with Flvalpha.a. Is not active in absence of Flvalpha.a, which is encoded by the same operon than Flvbeta.b. The bactericidal activity of lantibiotics is based on depolarization of energized bacterial cytoplasmic membranes, initiated by the formation of aqueous transmembrane pores. The polypeptide is Lantibiotic Flvbeta.b (Ruminococcus flavefaciens).